A 71-amino-acid chain; its full sequence is BBSome-interacting protein 1 (71 aa).

This sequence belongs to the BBIP10 family.

It is found in the cell projection. The protein resides in the cilium. The protein localises to the cytoplasm. Required for primary cilia assembly. The chain is BBSome-interacting protein 1 (bbip1) from Nematostella vectensis (Starlet sea anemone).